Reading from the N-terminus, the 861-residue chain is Glucans biosynthesis glucosyltransferase H (861 aa).

Helical transmembrane passes span 142–162 (FILL…MKGI), 188–208 (VLPY…FCWV), 516–536 (VFLT…FLVL), 573–593 (LFST…MLIW), 600–620 (FGGV…SVLL), and 683–703 (FLWW…VSVI).

It belongs to the glycosyltransferase 2 family. OpgH subfamily.

Its subcellular location is the cell inner membrane. Its pathway is glycan metabolism; osmoregulated periplasmic glucan (OPG) biosynthesis. Its function is as follows. Involved in the biosynthesis of osmoregulated periplasmic glucans (OPGs). In Pseudomonas aeruginosa (strain LESB58), this protein is Glucans biosynthesis glucosyltransferase H.